Consider the following 427-residue polypeptide: Glutamate-1-semialdehyde 2,1-aminomutase 1 (427 aa).

At K265 the chain carries N6-(pyridoxal phosphate)lysine.

Belongs to the class-III pyridoxal-phosphate-dependent aminotransferase family. HemL subfamily. As to quaternary structure, homodimer. Pyridoxal 5'-phosphate serves as cofactor.

The protein resides in the cytoplasm. It carries out the reaction (S)-4-amino-5-oxopentanoate = 5-aminolevulinate. It functions in the pathway porphyrin-containing compound metabolism; protoporphyrin-IX biosynthesis; 5-aminolevulinate from L-glutamyl-tRNA(Glu): step 2/2. The chain is Glutamate-1-semialdehyde 2,1-aminomutase 1 from Lachnoclostridium phytofermentans (strain ATCC 700394 / DSM 18823 / ISDg) (Clostridium phytofermentans).